Here is a 576-residue protein sequence, read N- to C-terminus: Arginine--tRNA ligase (576 aa).

Positions 122 to 132 (PNVAKQMHVGH) match the 'HIGH' region motif.

This sequence belongs to the class-I aminoacyl-tRNA synthetase family. Monomer.

Its subcellular location is the cytoplasm. The enzyme catalyses tRNA(Arg) + L-arginine + ATP = L-arginyl-tRNA(Arg) + AMP + diphosphate. The sequence is that of Arginine--tRNA ligase from Proteus mirabilis (strain HI4320).